Reading from the N-terminus, the 355-residue chain is Olfactory receptor 1I1 (355 aa).

Over 1-25 (MEPEKQTEISEFFLQGLSEKPEHQT) the chain is Extracellular. Residues 26–49 (LLFTMFLSTYLVTIIGNALIILAI) form a helical membrane-spanning segment. The Cytoplasmic portion of the chain corresponds to 50 to 57 (ITDSHLHT). The chain crosses the membrane as a helical span at residues 58-79 (PMYFFLFNLSLVDTLLSSTTVP). Over 80-100 (KMLANIQAQSRAIPFVGCLTQ) the chain is Extracellular. Residues 101 to 120 (MYAFHLFGTMDSFLLAVMAI) traverse the membrane as a helical segment. At 121-139 (DRFVAIVHPQRYLVLMCSP) the chain is on the cytoplasmic side. The chain crosses the membrane as a helical span at residues 140–158 (VCGLLLGASWMITNLQSLI). Residues 159–195 (HTCLMAQLTFCAGSEISHFFCDLMPLLKLSGSDTHTN) are Extracellular-facing. Residues 196–219 (ELVIFAFGIVVGTSPFSCILLSYI) traverse the membrane as a helical segment. The Cytoplasmic portion of the chain corresponds to 220–236 (RIFWTVFKIPSTRGKWK). The helical transmembrane segment at 237-259 (AFSTCGLHLTVVSLSYGTIFAVY) threads the bilayer. Over 260 to 272 (LQPTSPSSSQKDK) the chain is Extracellular. The helical transmembrane segment at 273–292 (AAALMCGVFIPMLNPFIYSI) threads the bilayer. Residues 293–355 (RNKDMKAALG…QSLAGNRDME (63 aa)) are Cytoplasmic-facing.

This sequence belongs to the G-protein coupled receptor 1 family.

The protein localises to the cell membrane. In terms of biological role, odorant receptor. This chain is Olfactory receptor 1I1 (OR1I1), found in Homo sapiens (Human).